Reading from the N-terminus, the 127-residue chain is Venom protein family 16 protein 1 (127 aa).

The first 18 residues, 1–18, serve as a signal peptide directing secretion; the sequence is MWIWYSLLFFGVCHLAHS.

As to expression, expressed by the venom gland (anterior main gland) (at protein level).

Its subcellular location is the secreted. The protein is Venom protein family 16 protein 1 of Platymeris rhadamanthus (Red spot assassin bug).